A 1200-amino-acid chain; its full sequence is Chromosome partition protein Smc (1200 aa).

Residue 33-40 (PNGSGKSN) participates in ATP binding. The tract at residues 90–109 (GENLSEPGANHNGNGNGAKI) is disordered. Residues 202 to 528 (EVQDREERCQ…AASQAQQEVQ (327 aa)) are a coiled coil. Positions 542–656 (PGVCGLVAQL…VFDTLVNARN (115 aa)) constitute an SMC hinge domain. Residues 692 to 1046 (TMVSEDTAEV…ERTELLLRIE (355 aa)) are a coiled coil.

This sequence belongs to the SMC family. As to quaternary structure, homodimer.

It is found in the cytoplasm. In terms of biological role, required for chromosome condensation and partitioning. The polypeptide is Chromosome partition protein Smc (Synechocystis sp. (strain ATCC 27184 / PCC 6803 / Kazusa)).